The primary structure comprises 425 residues: MAYNPKILQKPKEGEEITIKDGKLHVPNYPIIPFIEGDGIGSDITPAMIKVVDSAVQKAYKGEKKIAWYEVFVGEKCYQKFKDHKELSPEEQWLLPDTIEAINHYKVSIKGPLTTPIGEGFRSLNVALRQKMDLYVCLRPVRWYGSPSPVKEPQKVDMVIFRENSEDIYAGIEWQEGSAEAKKLIHFLQNELKVEKIRFPESSGVGIKPISKEGTERLVRKAIEYAIDNDKPSVTFVHKGNIMKYTEGAFMKWGYALAQKEFNAQVIDKGPWCSLKNPKTGKEIIIKDMIADAFLQQILLRPSEYSVIATMNLNGDYISDALAAMVGGIGIAPGANLNDTVGMFEATHGTAPKYAGLDKVNPGSIILSAEMMLRHMGWVEAADLIVSAMEKAIKSKKVTYDFARLMDGAKEVKCSEFASVMIENM.

An NADP(+)-binding site is contributed by Thr-114. 5 residues coordinate D-threo-isocitrate: Ser-123, Asn-125, Arg-129, Arg-139, and Arg-162. Asp-316 contributes to the Mg(2+) binding site. NADP(+) is bound by residues 348 to 354 (HGTAPKY), Asn-361, Tyr-400, and Arg-404.

This sequence belongs to the isocitrate and isopropylmalate dehydrogenases family. As to quaternary structure, homodimer. Mg(2+) serves as cofactor. Mn(2+) is required as a cofactor.

The enzyme catalyses D-threo-isocitrate + NADP(+) = 2-oxoglutarate + CO2 + NADPH. Its function is as follows. Catalyzes the oxidative decarboxylation of isocitrate to 2-oxoglutarate and carbon dioxide with the concomitant reduction of NADP(+). The sequence is that of Isocitrate dehydrogenase [NADP] (icd) from Helicobacter pylori (strain J99 / ATCC 700824) (Campylobacter pylori J99).